Here is a 628-residue protein sequence, read N- to C-terminus: 3-hydroxy-3-methylglutaryl-coenzyme A reductase 2 (628 aa).

Transmembrane regions (helical) follow at residues 38-58 (PLYL…YFLL) and 78-98 (EIVA…FFGI). The segment at 99–212 (DFVQSLIIRP…HEKTVIVTTE (114 aa)) is linker. N-linked (GlcNAc...) asparagine glycosylation is present at Asn153. Positions 213-628 (EDEEIIKSVV…SSKDMSNLSS (416 aa)) are catalytic. The active-site Charge relay system is Glu307. A glycan (N-linked (GlcNAc...) asparagine) is linked at Asn371. Lys439 functions as the Charge relay system in the catalytic mechanism. An N-linked (GlcNAc...) asparagine glycan is attached at Asn484. Asp515 serves as the catalytic Charge relay system. The active-site Proton donor is His613. Asn617 and Asn625 each carry an N-linked (GlcNAc...) asparagine glycan.

The protein belongs to the HMG-CoA reductase family.

The protein localises to the endoplasmic reticulum membrane. The protein resides in the mitochondrion membrane. It localises to the plastid membrane. It carries out the reaction (R)-mevalonate + 2 NADP(+) + CoA = (3S)-3-hydroxy-3-methylglutaryl-CoA + 2 NADPH + 2 H(+). It participates in metabolic intermediate biosynthesis; (R)-mevalonate biosynthesis; (R)-mevalonate from acetyl-CoA: step 3/3. Functionally, catalyzes the synthesis of mevalonate. The specific precursor of all isoprenoid compounds present in plants. The sequence is that of 3-hydroxy-3-methylglutaryl-coenzyme A reductase 2 (HMG2) from Gossypium hirsutum (Upland cotton).